A 555-amino-acid chain; its full sequence is La-related protein 7 (555 aa).

Residues 36 to 127 form the HTH La-type RNA-binding domain; sequence RSRVKQLLSD…RRKEPLGETP (92 aa). The RRM domain maps to 133–211; sequence RTVYVELLPK…PRKPGIFPKT (79 aa). Residues 218–327 are disordered; that stretch reads PFDAVTQDND…ENKDEELNSL (110 aa). Polar residues-rich tracts occupy residues 238–251, 258–274, and 284–293; these read KNSTSEETGSNNMD, STVTSEPNLATLTSTVS, and SQSFEASSGE. Positions 295–356 form a coiled coil; the sequence is QFEMSSKMRK…ERLKVGEEVI (62 aa). Residues 303–327 show a composition bias toward basic and acidic residues; that stretch reads RKVEEEKSELKDLSSENKDEELNSL. The 114-residue stretch at 425–538 folds into the xRRM domain; the sequence is EFLSGVIVKI…TEKLISKAEK (114 aa).

Belongs to the LARP7 family. Core component of the 7SK RNP complex. Associates with box C/D small nucleolar ribonucleoprotein (snoRNP) complexes.

Its subcellular location is the nucleus. It localises to the nucleoplasm. In terms of biological role, RNA-binding protein that specifically binds distinct small nuclear RNA (snRNAs) and regulates their processing and function. Specifically binds the 7SK snRNA (7SK RNA) and acts as a core component of the 7SK ribonucleoprotein (RNP) complex, thereby acting as a negative regulator of transcription elongation by RNA polymerase II. The 7SK RNP complex sequesters the positive transcription elongation factor b (P-TEFb) in a large inactive 7SK RNP complex preventing RNA polymerase II phosphorylation and subsequent transcriptional elongation. The 7SK RNP complex also promotes snRNA gene transcription by RNA polymerase II via interaction with the little elongation complex (LEC). LARP7 specifically binds to the highly conserved 3'-terminal U-rich stretch of 7SK RNA; on stimulation, remains associated with 7SK RNA, whereas P-TEFb is released from the complex. LARP7 also acts as a regulator of mRNA splicing fidelity by promoting U6 snRNA processing. Specifically binds U6 snRNAs and associates with a subset of box C/D RNP complexes: promotes U6 snRNA 2'-O-methylation by facilitating U6 snRNA loading into box C/D RNP complexes. U6 snRNA 2'-O-methylation is required for mRNA splicing fidelity. The protein is La-related protein 7 of Danio rerio (Zebrafish).